Here is a 434-residue protein sequence, read N- to C-terminus: Glucose-6-phosphate 1-dehydrogenase (434 aa).

NADP(+) contacts are provided by residues 7-14, Arg36, Tyr93, and Lys112; that span reads GSSGDLAK. D-glucose 6-phosphate is bound by residues Lys112, 137-141, Glu175, and Asp193; that span reads HYLLK. His198 (proton acceptor) is an active-site residue. D-glucose 6-phosphate contacts are provided by Lys280 and Lys285. NADP(+) is bound at residue Arg286.

Belongs to the glucose-6-phosphate dehydrogenase family.

It catalyses the reaction D-glucose 6-phosphate + NADP(+) = 6-phospho-D-glucono-1,5-lactone + NADPH + H(+). Its pathway is carbohydrate degradation; pentose phosphate pathway; D-ribulose 5-phosphate from D-glucose 6-phosphate (oxidative stage): step 1/3. Functionally, catalyzes the rate-limiting step of the oxidative pentose-phosphate pathway, which represents a route for the dissimilation of carbohydrates besides glycolysis. The main function of this enzyme is to provide reducing power (NADPH) and pentose phosphates for fatty acid and nucleic acid synthesis. The chain is Glucose-6-phosphate 1-dehydrogenase (ZWF1) from Encephalitozoon cuniculi (strain GB-M1) (Microsporidian parasite).